Here is a 728-residue protein sequence, read N- to C-terminus: MVAIPRLARLSVPAWALSARGRFYATVSTPQTLVEKIVQKYAVGLSEGVKVRAGDYVMIKPEHVMTHDNTGPVISKFLSLSCSKLDNPRQPVFALDHDVQNQSETNQKKYKKIQAFAKEHGVDFYPAGRGIGHQIIVEEGYAWPGKMVVASDSHSNHYGGVGCLGTAIVRTDAAGIWATGKFWWQIPRIVSVSLDGRLSPGVTGKDVIVALAGLFNKDEVLNAAIEFTGSGVEHLSIDERLTIANMTTEWGAVAGVFPVDDKLKEWYQGILRKAELRKFISPTVPSTVGAKVHPRLNAARLDDAMTNRVVADPGAHYAARLSLDLSTLVPHVSGPNSVKVATALPKLLDPPIPINKAYLVSCTNSRASDIASAAQVLRGKKVAPGVEFYIAAASSRVQEDAEAAGDWQTLIDAGAKTLPAGCGPCIGLGVGLLEKGEVGISATNRNYKGRMGSPDAIAYLASPAVVAASAAKGVICGPESMDLSQLPQYEQPKFSIIEEGAAGEEKPVEVDEASLEPLLEGFPAYFEGPLLFAPQDNLTTDGMYPGKYTYQDDITPERQAEVVMENYDPTFAATARELRTALPTASSPSTLPGAILLSGYNFGTGSSREQAATAIKNAGIPLVICGSFGDIFKRNSINNGLILIESPSLIKDMTERFAKDGVRNKGGKDGKLTVVPEGWRIKVDSQRGLVTVNMGEEEEKTYPAAKVGRSVQELWVNGGLEGFIRASL.

Residues 1–24 (MVAIPRLARLSVPAWALSARGRFY) constitute a mitochondrion transit peptide. C362, C422, and C425 together coordinate [4Fe-4S] cluster.

This sequence belongs to the aconitase/IPM isomerase family. [4Fe-4S] cluster serves as cofactor.

It localises to the mitochondrion. It carries out the reaction (2R,3S)-homoisocitrate = cis-homoaconitate + H2O. The protein operates within amino-acid biosynthesis; L-lysine biosynthesis via AAA pathway; L-alpha-aminoadipate from 2-oxoglutarate: step 3/5. In terms of biological role, catalyzes the reversible hydration of cis-homoaconitate to (2R,3S)-homoisocitrate, a step in the alpha-aminoadipate pathway for lysine biosynthesis. This is Homoaconitase, mitochondrial (LYS4) from Cryptococcus neoformans var. neoformans serotype D (strain JEC21 / ATCC MYA-565) (Filobasidiella neoformans).